The sequence spans 362 residues: MTPAGKRILVMAGGTGGHVFPALAVAKYLAQQGWQVRWLGTADRMEARLVPQYGFDIDFIDIKGVRGNGLIRKLAAPFKVVRSILQAKAVIAEFKPDVVLGMGGFASGPGGVAARLAGIPLVLHEQNAIPGMTNKLLSRIATQVLCAFKNTFTTVKAKVVGNPIRQELIALGAQPKPEADKALKVLVVGGSLGAKVFNDLMPEAVAILSQQQSVTVWHQVGKDNLAGVKAAYQQHGQDGGVNIAEFIDDMEAAYRWADVVLCRAGALTVSELAAVGLPSILVPYPHAVDDHQTRNGQVLVEAGAAFLLPQAILDVNKLAGKLQLLANDRTELARMGQRARDVAVLDATEQVAAVCISLAEKG.

UDP-N-acetyl-alpha-D-glucosamine is bound by residues 15–17, Asn-127, Arg-165, Ser-191, Ile-247, 266–271, and Gln-292; these read TGG and ALTVSE.

This sequence belongs to the glycosyltransferase 28 family. MurG subfamily.

The protein localises to the cell inner membrane. It catalyses the reaction di-trans,octa-cis-undecaprenyl diphospho-N-acetyl-alpha-D-muramoyl-L-alanyl-D-glutamyl-meso-2,6-diaminopimeloyl-D-alanyl-D-alanine + UDP-N-acetyl-alpha-D-glucosamine = di-trans,octa-cis-undecaprenyl diphospho-[N-acetyl-alpha-D-glucosaminyl-(1-&gt;4)]-N-acetyl-alpha-D-muramoyl-L-alanyl-D-glutamyl-meso-2,6-diaminopimeloyl-D-alanyl-D-alanine + UDP + H(+). The protein operates within cell wall biogenesis; peptidoglycan biosynthesis. Its function is as follows. Cell wall formation. Catalyzes the transfer of a GlcNAc subunit on undecaprenyl-pyrophosphoryl-MurNAc-pentapeptide (lipid intermediate I) to form undecaprenyl-pyrophosphoryl-MurNAc-(pentapeptide)GlcNAc (lipid intermediate II). The chain is UDP-N-acetylglucosamine--N-acetylmuramyl-(pentapeptide) pyrophosphoryl-undecaprenol N-acetylglucosamine transferase from Shewanella baltica (strain OS185).